The primary structure comprises 322 residues: Ribonuclease Z (322 aa).

Positions 62, 64, 66, 67, 143, 215, and 273 each coordinate Zn(2+). D66 (proton acceptor) is an active-site residue. The span at E300 to D314 shows a compositional bias: basic and acidic residues. The interval E300–S322 is disordered.

The protein belongs to the RNase Z family. In terms of assembly, homodimer. It depends on Zn(2+) as a cofactor.

The catalysed reaction is Endonucleolytic cleavage of RNA, removing extra 3' nucleotides from tRNA precursor, generating 3' termini of tRNAs. A 3'-hydroxy group is left at the tRNA terminus and a 5'-phosphoryl group is left at the trailer molecule.. Its function is as follows. Zinc phosphodiesterase, which displays some tRNA 3'-processing endonuclease activity. Probably involved in tRNA maturation, by removing a 3'-trailer from precursor tRNA. The protein is Ribonuclease Z of Salinibacter ruber (strain DSM 13855 / M31).